The following is a 1464-amino-acid chain: MSDKFKLLLKQIHFPQHEEAYNEIKSGSIESVKLFKSKRQWFFVFSFRNLLSYETFTLFDNLLHSSFDSLGAKVSYMINVEDISCDQSLLEAYFSYALDILKSSHFSIYSLFSNLGIEISNNSISVKAPAHILRENLHERFIALIADVLSNVGLSNVSISVLEDKEASSSLEEAYETNKISLQEEAESQARQALQSIVQSSPVPPPQKHQAQNFAEKQSQRVASFDKAEITPMIEVNSEENRIVFEGYIFDVEQRETKTGRIIINFKVTDYTSSFAMQRWVKDSEELVKFGMIKKGNWVRVRGRIENNPFTHSLTMNVQDIKEISHTPRKDLMPEGQKRVEFHAHTNMSTMDAIPTVEELIDTAAFWGHPAVAITDHANVQSFPHGYHKAKKAGIKAIFGLEANLVEDKVPIVYNSENLELKEATYVVFDVETTGLSAVHNDLIQIAASKMHKGNIVEQFDEFIDPGYPLSAFTTELTGITDNHVKGAKPLVQVLQEFQEFCKGAVLVAHNATFDVGFMNANYERHQLPTISQPVIDTLEFARNLYPEYKRHGLGPLTKRFGVALDHHHMANYDAEATGRLLFIFIKDVFEKHGLTNLEQLNTELVSDDSYKKSRVKHATLYVQNQTGLKNIFKLVSLSNVSYFEGVARIPRKVLDEYREGIIVGSACADGEVFDTLLSHGIDKAVEVAKYYDFIEVMPPAIYAPLIAKDLIKDEEAIEQLIRDLIEVANRLDKPVLATGNVHYINPEDAIYREIIVRALGQGAMINRPIGKGENAQPAPLPEAHFRTTNEMLDEFAFLGKDLAYEIVVANTQAMANQIEEVEVVKKDLYTPYIDRAEEQVAEMTYAKAFELYGNPLPDIIDLRIEKELSSILGNGFAVIYLASQMLVNRSNERGYLVGSRGSVGSSFVATMIGITEVNPMPPHYLCPKCQHSEFITDGSYGSGFDLPDKECSECGTEYKKDGQDIPFETFLGFDGDKVPDIDLNFSGDDQPSAHLDVRDIFGEQYAFRAGTVGTVADRTAYGFVKGYERDYNKFYRDAEVDRLAMGVAGVKRNTGQHPGGIVVIPNYMDVYDFTPVQYPADDVTAAWQTTHFNFHDIDENVLKLDILGHDDPTMIRKLQDLSGIDPKDIRADDPDVMKLFSGTEVLGVTPEQIGTSTGVLGIPEFGTNFVRGMVEETHPTTFAELLQLSGLSHGTDVWLGNAQDLIKEGIATLKTVIGCRDDIMVYLMHAGLDPKMAFTIMERVRKGMWLKISEEERNGYIQAMRENNVPDWYIESCGKIKYMFPKAHAAAYVMMALRVAYFKVHHPIYYYCAYFSIRAKAFELKTMSAGLDAVKARMEDIKEKRQRNEATNLENDLFTTLEIVNEMLERGFTFGQLDLYKSQATEFLIEGDTLIPPFIALEGLGENVAKQLVAAREEGEFLSKTELRKRGGLSSTLVERLDEMGILGNMPEDNQLSLFDDFF.

An Exonuclease domain is found at 426–582 (YVVFDVETTG…YDAEATGRLL (157 aa)).

Belongs to the DNA polymerase type-C family. PolC subfamily.

It is found in the cytoplasm. It carries out the reaction DNA(n) + a 2'-deoxyribonucleoside 5'-triphosphate = DNA(n+1) + diphosphate. Functionally, required for replicative DNA synthesis. This DNA polymerase also exhibits 3' to 5' exonuclease activity. The polypeptide is DNA polymerase III PolC-type (Streptococcus thermophilus (strain ATCC BAA-250 / LMG 18311)).